Consider the following 154-residue polypeptide: Large ribosomal subunit protein uL15 (154 aa).

Residues 1-44 (MKLNELGNCKGATRNRKRVGRGIGSGTGKTSGRGVKGQKSRSGV) are disordered. The span at 21-35 (RGIGSGTGKTSGRGV) shows a compositional bias: gly residues.

It belongs to the universal ribosomal protein uL15 family. As to quaternary structure, part of the 50S ribosomal subunit.

In terms of biological role, binds to the 23S rRNA. This is Large ribosomal subunit protein uL15 from Bartonella quintana (strain Toulouse) (Rochalimaea quintana).